Consider the following 171-residue polypeptide: 6,7-dimethyl-8-ribityllumazine synthase (171 aa).

5-amino-6-(D-ribitylamino)uracil-binding positions include F24, 58–60, and 82–84; these read ALE and AVI. Residue 87 to 88 participates in (2S)-2-hydroxy-3-oxobutyl phosphate binding; that stretch reads ET. The active-site Proton donor is H90. N115 contacts 5-amino-6-(D-ribitylamino)uracil. R129 contributes to the (2S)-2-hydroxy-3-oxobutyl phosphate binding site. Residues 150-171 form a disordered region; that stretch reads ALDQLGDDEDEEEDEEDEEERA. Over residues 154–171 the composition is skewed to acidic residues; the sequence is LGDDEDEEEDEEDEEERA.

The protein belongs to the DMRL synthase family.

The enzyme catalyses (2S)-2-hydroxy-3-oxobutyl phosphate + 5-amino-6-(D-ribitylamino)uracil = 6,7-dimethyl-8-(1-D-ribityl)lumazine + phosphate + 2 H2O + H(+). It participates in cofactor biosynthesis; riboflavin biosynthesis; riboflavin from 2-hydroxy-3-oxobutyl phosphate and 5-amino-6-(D-ribitylamino)uracil: step 1/2. Functionally, catalyzes the formation of 6,7-dimethyl-8-ribityllumazine by condensation of 5-amino-6-(D-ribitylamino)uracil with 3,4-dihydroxy-2-butanone 4-phosphate. This is the penultimate step in the biosynthesis of riboflavin. The protein is 6,7-dimethyl-8-ribityllumazine synthase of Burkholderia ambifaria (strain ATCC BAA-244 / DSM 16087 / CCUG 44356 / LMG 19182 / AMMD) (Burkholderia cepacia (strain AMMD)).